A 463-amino-acid polypeptide reads, in one-letter code: Histone acetyltransferase mst1 (463 aa).

A Tudor-knot domain is found at 22–74 (VYKSKVFAFKDGEYRKAEILMIQKRTRGVVYYVHYNDYNKRLDEWITIDNIDL). Residues 76 to 145 (KGIEYPPPEK…GSNAGNESLP (70 aa)) form a disordered region. The segment covering 87–99 (KKAHGKGKSSKRP) has biased composition (basic residues). Residues 111–121 (PSKTEPSTPST) are compositionally biased toward low complexity. The region spanning 179 to 451 (ARIRNINKIC…NGDLLADWQP (273 aa)) is the MYST-type HAT domain. A C2HC MYST-type zinc finger spans residues 212–237 (VYICSFCFCYYGSERQFQRHREKCTL). Residues 262-283 (RTWCRNICLLSKLFLDHKMLYY) carry the ESA1-RPD3 motif motif. Position 279 is an N6-acetyllysine; by autocatalysis (Lys-279). Acetyl-CoA is bound by residues 320-324 (ACILT) and 329-335 (QRHGYGK). The active-site Proton donor/acceptor is Glu-355. Residue Ser-359 participates in acetyl-CoA binding.

It belongs to the MYST (SAS/MOZ) family. In terms of assembly, component of the NuA4 histone acetyltransferase complex. Interacts with arp4. In terms of processing, autoacetylation at Lys-279 is required for proper function.

Its subcellular location is the nucleus. It localises to the chromosome. It catalyses the reaction L-lysyl-[histone] + acetyl-CoA = N(6)-acetyl-L-lysyl-[histone] + CoA + H(+). It carries out the reaction L-lysyl-[protein] + acetyl-CoA = N(6)-acetyl-L-lysyl-[protein] + CoA + H(+). The catalysed reaction is 2-hydroxyisobutanoyl-CoA + L-lysyl-[protein] = N(6)-(2-hydroxyisobutanoyl)-L-lysyl-[protein] + CoA + H(+). The enzyme catalyses (2E)-butenoyl-CoA + L-lysyl-[protein] = N(6)-(2E)-butenoyl-L-lysyl-[protein] + CoA + H(+). In terms of biological role, catalytic component of the NuA4 histone acetyltransferase (HAT) complex which is involved in epigenetic transcriptional activation of selected genes principally by acetylation of nucleosomal histones H4, H3, H2B, H2A and H2A variant H2A.Z. Acetylates histone H4 to form H4K5ac, H4K8ac, H4K12ac and H4K16ac, histone H3 to form H3K14ac, and histone H2A to form H2AK4ac and H2AK7ac. The NuA4 complex is involved in the DNA damage response and is required for chromosome segregation. The NuA4 complex plays a direct role in repair of DNA double-strand breaks (DSBs) through homologous recombination. Recruitment to promoters depends on H3K4me. Also acetylates non-histone proteins. In addition to protein acetyltransferase, can use different acyl-CoA substrates, such as 2-hydroxyisobutanoyl-CoA (2-hydroxyisobutyryl-CoA) or (2E)-butenoyl-CoA (crotonyl-CoA), and is able to mediate protein 2-hydroxyisobutyrylation and crotonylation, respectively. The polypeptide is Histone acetyltransferase mst1 (Schizosaccharomyces pombe (strain 972 / ATCC 24843) (Fission yeast)).